Consider the following 340-residue polypeptide: tRNA N6-adenosine threonylcarbamoyltransferase (340 aa).

Histidine 111 and histidine 115 together coordinate Fe cation. Residues leucine 134–glycine 138, aspartate 167, glycine 180, and asparagine 272 each bind substrate. Residue aspartate 300 participates in Fe cation binding.

The protein belongs to the KAE1 / TsaD family. Fe(2+) is required as a cofactor.

It localises to the cytoplasm. The enzyme catalyses L-threonylcarbamoyladenylate + adenosine(37) in tRNA = N(6)-L-threonylcarbamoyladenosine(37) in tRNA + AMP + H(+). In terms of biological role, required for the formation of a threonylcarbamoyl group on adenosine at position 37 (t(6)A37) in tRNAs that read codons beginning with adenine. Is involved in the transfer of the threonylcarbamoyl moiety of threonylcarbamoyl-AMP (TC-AMP) to the N6 group of A37, together with TsaE and TsaB. TsaD likely plays a direct catalytic role in this reaction. This is tRNA N6-adenosine threonylcarbamoyltransferase from Proteus mirabilis (strain HI4320).